The chain runs to 450 residues: F-box protein KIB3 (450 aa).

One can recognise an F-box domain in the interval 20 to 50 (DLVRLILERLSFVDFHRARCVSSTWYVASKS).

It localises to the cytoplasm. It is found in the nucleus. The protein localises to the nucleolus. Component of SCF(ASK-cullin-F-box) E3 ubiquitin ligase complexes, which may mediate the ubiquitination and subsequent proteasomal degradation of target proteins. Required for brassinosteroid (BR) signal transduction. Mediates ASK7/BIN2/SK21 inactivation both by competing with substrate binding (e.g. BZR1) and by promoting its ubiquitination and subsequent proteasomal degradation. In Arabidopsis thaliana (Mouse-ear cress), this protein is F-box protein KIB3.